A 115-amino-acid polypeptide reads, in one-letter code: Large ribosomal subunit protein P2z (115 aa).

A disordered region spans residues Leu-62 to Glu-115. Positions Glu-92–Lys-102 are enriched in basic and acidic residues. At Ser-105 the chain carries Phosphoserine.

Belongs to the eukaryotic ribosomal protein P1/P2 family. As to quaternary structure, P1 and P2 exist as dimers at the large ribosomal subunit. Post-translationally, phosphorylated.

Plays an important role in the elongation step of protein synthesis. The protein is Large ribosomal subunit protein P2z (RPP2A) of Arabidopsis thaliana (Mouse-ear cress).